We begin with the raw amino-acid sequence, 390 residues long: NADH-quinone oxidoreductase subunit D (390 aa).

The protein belongs to the complex I 49 kDa subunit family. NDH-1 is composed of 14 different subunits. Subunits NuoB, C, D, E, F, and G constitute the peripheral sector of the complex.

The protein localises to the cell membrane. The catalysed reaction is a quinone + NADH + 5 H(+)(in) = a quinol + NAD(+) + 4 H(+)(out). NDH-1 shuttles electrons from NADH, via FMN and iron-sulfur (Fe-S) centers, to quinones in the respiratory chain. The immediate electron acceptor for the enzyme in this species is believed to be ubiquinone. Couples the redox reaction to proton translocation (for every two electrons transferred, four hydrogen ions are translocated across the cytoplasmic membrane), and thus conserves the redox energy in a proton gradient. This Wolbachia pipientis wMel protein is NADH-quinone oxidoreductase subunit D.